Here is a 753-residue protein sequence, read N- to C-terminus: 5-methyltetrahydropteroyltriglutamate--homocysteine methyltransferase (753 aa).

5-methyltetrahydropteroyltri-L-glutamate contacts are provided by residues Arg17–Lys20 and Lys117. L-homocysteine-binding positions include Ile431–Ser433 and Glu484. Residues Ile431–Ser433 and Glu484 contribute to the L-methionine site. 5-methyltetrahydropteroyltri-L-glutamate is bound by residues Arg515–Cys516 and Trp561. An L-homocysteine-binding site is contributed by Asp599. Residue Asp599 coordinates L-methionine. Glu605 provides a ligand contact to 5-methyltetrahydropteroyltri-L-glutamate. Zn(2+) contacts are provided by His641, Cys643, and Glu665. Catalysis depends on His694, which acts as the Proton donor. Cys726 is a binding site for Zn(2+).

It belongs to the vitamin-B12 independent methionine synthase family. It depends on Zn(2+) as a cofactor.

It catalyses the reaction 5-methyltetrahydropteroyltri-L-glutamate + L-homocysteine = tetrahydropteroyltri-L-glutamate + L-methionine. Its pathway is amino-acid biosynthesis; L-methionine biosynthesis via de novo pathway; L-methionine from L-homocysteine (MetE route): step 1/1. Its function is as follows. Catalyzes the transfer of a methyl group from 5-methyltetrahydrofolate to homocysteine resulting in methionine formation. The protein is 5-methyltetrahydropteroyltriglutamate--homocysteine methyltransferase of Escherichia coli (strain ATCC 8739 / DSM 1576 / NBRC 3972 / NCIMB 8545 / WDCM 00012 / Crooks).